Here is a 357-residue protein sequence, read N- to C-terminus: Vomeronasal type-1 receptor 5 (357 aa).

Residues 1-3 are Extracellular-facing; sequence MLK. A helical transmembrane segment spans residues 4–24; that stretch reads LVIIENMAEIMLFSLDLLLFS. Topologically, residues 25–52 are cytoplasmic; the sequence is TDILCFNFPSKMIKLPGFITIQIFFYPQ. Residues 53–73 form a helical membrane-spanning segment; that stretch reads ASFGISANTILLLFHIFTFVF. At 74–81 the chain is on the extracellular side; sequence SHRSKSID. A helical membrane pass occupies residues 82 to 102; sequence MIISHLSLIHILLLFTQAILV. At 103-130 the chain is on the cytoplasmic side; it reads SLDFFGSQNTQDDLRYKVIVFLNKVMRG. Residues 131–151 form a helical membrane-spanning segment; that stretch reads LSICTPCLLSVLQAIISPSIF. At 152–163 the chain is on the extracellular side; it reads SLAKLKHPSASH. The helical transmembrane segment at 164 to 184 threads the bilayer; the sequence is ILGFFLFSWVLNMFIGVIFCC. At 185–269 the chain is on the cytoplasmic side; sequence TLRLPPVKRG…RVSPVKRASQ (85 aa). A helical transmembrane segment spans residues 270–290; that stretch reads AILLLVSFVFTYWVDFTFSFS. The Extracellular segment spans residues 291 to 300; the sequence is GGVTWINDSL. N-linked (GlcNAc...) asparagine glycosylation occurs at Asn-297. Residues 301–321 traverse the membrane as a helical segment; it reads LVWLQVIVANSYAAISPLMLI. At 322-357 the chain is on the cytoplasmic side; sequence YADNQIFKTLQMLWFKYLSPPKLMLKFNRQCGSTKK.

Belongs to the G-protein coupled receptor 1 family.

Its subcellular location is the cell membrane. Functionally, putative pheromone receptor. This is Vomeronasal type-1 receptor 5 (VN1R5) from Homo sapiens (Human).